The primary structure comprises 560 residues: Interferon alpha/beta receptor 1 (560 aa).

An N-terminal signal peptide occupies residues 1-24 (MLSLLGATTLMLVAGRWVLPAASG). The Extracellular portion of the chain corresponds to 25-437 (EANLKSENVE…EKTKPGNTSK (413 aa)). N-linked (GlcNAc...) asparagine glycosylation is found at Asn-47 and Asn-55. The cysteines at positions 76 and 84 are disulfide-linked. Asn-85, Asn-108, Asn-109, and Asn-172 each carry an N-linked (GlcNAc...) asparagine glycan. Fibronectin type-III domains are found at residues 126-226 (QIGP…TTER), 231-329 (SPEN…TEVK), and 333-433 (FPPV…TKPG). Cysteines 199 and 220 form a disulfide. 5 N-linked (GlcNAc...) asparagine glycosylation sites follow: Asn-222, Asn-285, Asn-313, Asn-359, and Asn-377. Cys-283 and Cys-291 are oxidised to a cystine. Residues Cys-404 and Cys-427 are joined by a disulfide bond. Asn-434 carries an N-linked (GlcNAc...) asparagine glycan. Residues 438 to 458 (TWLIAGICTALFSILVVIYVV) form a helical membrane-spanning segment. Topologically, residues 459–560 (RVFLRCVKYV…SEEFLQQDSV (102 aa)) are cytoplasmic. Cys-464 carries the S-palmitoyl cysteine lipid modification. Phosphotyrosine; by TYK2 occurs at positions 467 and 482. The important for interaction with TYK2 stretch occupies residues 492-501 (LLSTSEEQTE). 2 positions are modified to phosphoserine: Ser-496 and Ser-536. Residues 524-560 (VHEEYNSQASQDSGNYSNEDENSGSKISEEFLQQDSV) form a disordered region. Residues 529–540 (NSQASQDSGNYS) show a composition bias toward polar residues.

Belongs to the type II cytokine receptor family. Heterodimer with IFNAR2; forming the receptor for type I interferon. Interacts with TYK2. Interacts with STAT1 and STAT2; the interaction requires its phosphorylation at Tyr-482. Interacts (serine-phosphorylated form) with FBXW11, the substrate recognition component of a SCF (SKP1-CUL1-F-box protein) E3 ubiquitin-protein ligase complex. Interacts with SHMT2; this promotes interaction with ABRAXAS2 and the BRISC complex. Interacts with TRIM10; this interaction prevents association between IFNAR1 and TYK2. In terms of processing, ubiquitinated, leading to its internalization and degradation. Polyubiquitinated via 'Lys-48'-linked and 'Lys-63'-linked ubiquitin chains, leading to receptor internalization and lysosomal degradation. The 'Lys-63'-linked ubiquitin chains are cleaved off by the BRISC complex. Post-translationally, phosphorylated on tyrosine residues in response to interferon-binding: phosphorylation by TYK2 tyrosine kinase creates docking sites for STAT proteins. Phosphorylated on serine residues in response to interferon binding; this promotes interaction with FBXW11 and ubiquitination. Palmitoylation at Cys-464 is required for the activation of STAT1 and STAT2. Expressed in the endometrium. Expressed in all tissues examined except conceptus at day 15 of pregnancy.

The protein resides in the cell membrane. Its subcellular location is the late endosome. The protein localises to the lysosome. In terms of biological role, together with IFNAR2, forms the heterodimeric receptor for type I interferons (including interferons alpha, beta, epsilon, omega and kappa). Type I interferon binding activates the JAK-STAT signaling cascade, resulting in transcriptional activation or repression of interferon-regulated genes that encode the effectors of the interferon response. Mechanistically, type I interferon-binding brings the IFNAR1 and IFNAR2 subunits into close proximity with one another, driving their associated Janus kinases (JAKs) (TYK2 bound to IFNAR1 and JAK1 bound to IFNAR2) to cross-phosphorylate one another. The activated kinases phosphorylate specific tyrosine residues on the intracellular domains of IFNAR1 and IFNAR2, forming docking sites for the STAT transcription factors. STAT proteins are then phosphorylated by the JAKs, promoting their translocation into the nucleus to regulate expression of interferon-regulated genes. Can also act independently of IFNAR2: form an active IFNB1 receptor by itself and activate a signaling cascade that does not involve activation of the JAK-STAT pathway. The sequence is that of Interferon alpha/beta receptor 1 (IFNAR1) from Ovis aries (Sheep).